A 109-amino-acid chain; its full sequence is Large ribosomal subunit protein uL22 (109 aa).

The protein belongs to the universal ribosomal protein uL22 family. In terms of assembly, part of the 50S ribosomal subunit.

Its function is as follows. This protein binds specifically to 23S rRNA; its binding is stimulated by other ribosomal proteins, e.g. L4, L17, and L20. It is important during the early stages of 50S assembly. It makes multiple contacts with different domains of the 23S rRNA in the assembled 50S subunit and ribosome. Functionally, the globular domain of the protein is located near the polypeptide exit tunnel on the outside of the subunit, while an extended beta-hairpin is found that lines the wall of the exit tunnel in the center of the 70S ribosome. In Laribacter hongkongensis (strain HLHK9), this protein is Large ribosomal subunit protein uL22.